The sequence spans 193 residues: MRNIVLASSSPRRKDLLEQIKLPFEIIPSDIEENISELSGTPAKKAEQLSYQKARDVADKVQKGLILGADTIVVIDDEILGKPKDSEDAYNMLKKLSGKEHEVITGICLLDLDNKIELIQHETTFVKFIELDDEKIKAYIKSGEAFGKAGSYAAQGVGAIFVKGIKGCYSNIVGLPLNRLGNMLEKLNEKIIK.

The Proton acceptor role is filled by D70.

Belongs to the Maf family. YhdE subfamily. A divalent metal cation serves as cofactor.

The protein resides in the cytoplasm. It carries out the reaction dTTP + H2O = dTMP + diphosphate + H(+). The catalysed reaction is UTP + H2O = UMP + diphosphate + H(+). Functionally, nucleoside triphosphate pyrophosphatase that hydrolyzes dTTP and UTP. May have a dual role in cell division arrest and in preventing the incorporation of modified nucleotides into cellular nucleic acids. The chain is dTTP/UTP pyrophosphatase from Ruminiclostridium cellulolyticum (strain ATCC 35319 / DSM 5812 / JCM 6584 / H10) (Clostridium cellulolyticum).